The primary structure comprises 193 residues: MALIPMVVEQTSRGERSYDIYSRLLKERVIFLSGEVEDNMANLIVAQLLFLESENPEKDINLYINSPGGSVTAGMAIYDTMQFIKPDVRTLCVGQACSMGAFLLAGGAAGKRAALPHARVMIHQPLGGFRGQASDIQIHAQEILKIKQTLNERLAFHTGQPFEVIERDTDRDNFMSAEDAKNYGLIDSVLVKR.

Ser-98 serves as the catalytic Nucleophile. His-123 is an active-site residue.

The protein belongs to the peptidase S14 family. Fourteen ClpP subunits assemble into 2 heptameric rings which stack back to back to give a disk-like structure with a central cavity, resembling the structure of eukaryotic proteasomes.

It is found in the cytoplasm. It carries out the reaction Hydrolysis of proteins to small peptides in the presence of ATP and magnesium. alpha-casein is the usual test substrate. In the absence of ATP, only oligopeptides shorter than five residues are hydrolyzed (such as succinyl-Leu-Tyr-|-NHMec, and Leu-Tyr-Leu-|-Tyr-Trp, in which cleavage of the -Tyr-|-Leu- and -Tyr-|-Trp bonds also occurs).. Its function is as follows. Cleaves peptides in various proteins in a process that requires ATP hydrolysis. Has a chymotrypsin-like activity. Plays a major role in the degradation of misfolded proteins. This is ATP-dependent Clp protease proteolytic subunit from Mannheimia succiniciproducens (strain KCTC 0769BP / MBEL55E).